The following is a 622-amino-acid chain: Pentatricopeptide repeat-containing protein At5g06540 (622 aa).

10 PPR repeats span residues asparagine 81–proline 115, aspartate 116–asparagine 150, aspartate 151–arginine 181, aspartate 182–arginine 212, asparagine 213–alanine 247, asparagine 248–valine 282, asparagine 283–threonine 313, aspartate 314–proline 348, arginine 349–proline 384, and arginine 385–proline 419. A type E motif region spans residues isoleucine 420–aspartate 495. The interval glycine 496 to arginine 527 is type E(+) motif. A type DYW motif region spans residues leucine 528–tryptophan 622.

Belongs to the PPR family. PCMP-H subfamily.

This chain is Pentatricopeptide repeat-containing protein At5g06540 (PCMP-H88), found in Arabidopsis thaliana (Mouse-ear cress).